The chain runs to 130 residues: Protein ApaG (130 aa).

In terms of domain architecture, ApaG spans 3–127 (KAETRGISVT…FSLDVPHVRR (125 aa)).

This chain is Protein ApaG, found in Methylobacterium sp. (strain 4-46).